The chain runs to 93 residues: Small ribosomal subunit protein uS19 (93 aa).

The protein belongs to the universal ribosomal protein uS19 family.

Its function is as follows. Protein S19 forms a complex with S13 that binds strongly to the 16S ribosomal RNA. In Salinispora tropica (strain ATCC BAA-916 / DSM 44818 / JCM 13857 / NBRC 105044 / CNB-440), this protein is Small ribosomal subunit protein uS19.